The following is a 406-amino-acid chain: Argininosuccinate synthase (406 aa).

Residue 8-16 (AYSGGLDTS) participates in ATP binding. Y86 contacts L-citrulline. G116 provides a ligand contact to ATP. The L-aspartate site is built by T118, N122, and D123. An L-citrulline-binding site is contributed by N122. The L-citrulline site is built by R126, S174, S183, E259, and Y271.

The protein belongs to the argininosuccinate synthase family. Type 1 subfamily. In terms of assembly, homotetramer.

Its subcellular location is the cytoplasm. It carries out the reaction L-citrulline + L-aspartate + ATP = 2-(N(omega)-L-arginino)succinate + AMP + diphosphate + H(+). It participates in amino-acid biosynthesis; L-arginine biosynthesis; L-arginine from L-ornithine and carbamoyl phosphate: step 2/3. The sequence is that of Argininosuccinate synthase from Oenococcus oeni (strain ATCC BAA-331 / PSU-1).